The primary structure comprises 612 residues: Heparan-sulfate 6-O-sulfotransferase 2 (612 aa).

At 1–4 (MALP) the chain is on the cytoplasmic side. A helical; Signal-anchor for type II membrane protein transmembrane segment spans residues 5–27 (AFAARALGPPLQPEQGAPARTTC). A disordered region spans residues 9 to 52 (RALGPPLQPEQGAPARTTCPRRHSRVEAELAASRPGSVAASVRA). The Lumenal portion of the chain corresponds to 28–612 (PRRHSRVEAE…DYIGSVETWR (585 aa)). Residue asparagine 209 is glycosylated (N-linked (GlcNAc...) asparagine). 233–241 (HIQKTGGTT) contributes to the 3'-phosphoadenylyl sulfate binding site. Substrate contacts are provided by residues 263 to 264 (KK), arginine 280, tryptophan 285, and histidine 290. The active-site Proton acceptor is histidine 290. 3'-phosphoadenylyl sulfate contacts are provided by arginine 325 and serine 333. Histidine 337 and tryptophan 344 together coordinate substrate. Asparagine 404 carries an N-linked (GlcNAc...) asparagine glycan. A 3'-phosphoadenylyl sulfate-binding site is contributed by 457–459 (TQY). Asparagine 460 carries N-linked (GlcNAc...) asparagine glycosylation. Residue 463-464 (RA) coordinates 3'-phosphoadenylyl sulfate. The interval 529–612 (HFQSQSQGQS…DYIGSVETWR (84 aa)) is disordered. Positions 531–564 (QSQSQGQSQSQSPGQNLSQNPNPNPNQNLTQNLS) are enriched in low complexity. N-linked (GlcNAc...) asparagine glycosylation is found at asparagine 546, asparagine 558, asparagine 562, asparagine 574, and asparagine 599. The span at 565 to 577 (HNLTPSSNPNSTQ) shows a compositional bias: polar residues.

Belongs to the sulfotransferase 6 family.

The protein resides in the membrane. The catalysed reaction is alpha-D-glucosaminyl-[heparan sulfate](n) + 3'-phosphoadenylyl sulfate = 6-sulfo-alpha-D-glucosaminyl-[heparan sulfate](n) + adenosine 3',5'-bisphosphate + H(+). In terms of biological role, 6-O-sulfation enzyme which catalyzes the transfer of sulfate from 3'-phosphoadenosine 5'-phosphosulfate (PAPS) to position 6 of the N-sulfoglucosamine residue (GlcNS) of heparan sulfate. This Mus musculus (Mouse) protein is Heparan-sulfate 6-O-sulfotransferase 2 (Hs6st2).